Here is a 205-residue protein sequence, read N- to C-terminus: Nitrophorin-4 (205 aa).

A signal peptide spans 1-21; it reads MKSYTSLLAVAILCLFGGVNG. 2 cysteine pairs are disulfide-bonded: Cys23–Cys143 and Cys62–Cys192. Heme is bound at residue His80.

This sequence belongs to the calycin superfamily. Nitrophorin family. Heme b serves as cofactor. As to expression, salivary gland (at protein level).

The protein resides in the secreted. It carries out the reaction 3 nitrite + 2 H(+) = 2 nitric oxide + nitrate + H2O. Its function is as follows. Heme-based protein that delivers nitric oxide gas (NO) to the victim while feeding, resulting in vasodilation and inhibition of platelet aggregation. Reversibly binds nitric oxide (NO). Also binds tightly to histamine, which is released by the host to induce wound healing. NO release is pH dependent and linked to loop dynamics. The protein is Nitrophorin-4 of Rhodnius prolixus (Triatomid bug).